Here is a 245-residue protein sequence, read N- to C-terminus: Ubiquinone/menaquinone biosynthesis C-methyltransferase UbiE (245 aa).

S-adenosyl-L-methionine contacts are provided by residues threonine 71, aspartate 92, and 118–119 (DA).

Belongs to the class I-like SAM-binding methyltransferase superfamily. MenG/UbiE family.

The enzyme catalyses a 2-demethylmenaquinol + S-adenosyl-L-methionine = a menaquinol + S-adenosyl-L-homocysteine + H(+). The catalysed reaction is a 2-methoxy-6-(all-trans-polyprenyl)benzene-1,4-diol + S-adenosyl-L-methionine = a 5-methoxy-2-methyl-3-(all-trans-polyprenyl)benzene-1,4-diol + S-adenosyl-L-homocysteine + H(+). The protein operates within quinol/quinone metabolism; menaquinone biosynthesis; menaquinol from 1,4-dihydroxy-2-naphthoate: step 2/2. It functions in the pathway cofactor biosynthesis; ubiquinone biosynthesis. Methyltransferase required for the conversion of demethylmenaquinol (DMKH2) to menaquinol (MKH2) and the conversion of 2-polyprenyl-6-methoxy-1,4-benzoquinol (DDMQH2) to 2-polyprenyl-3-methyl-6-methoxy-1,4-benzoquinol (DMQH2). The protein is Ubiquinone/menaquinone biosynthesis C-methyltransferase UbiE of Neisseria meningitidis serogroup A / serotype 4A (strain DSM 15465 / Z2491).